Here is a 397-residue protein sequence, read N- to C-terminus: Acetate kinase (397 aa).

Position 8 (Asn-8) interacts with Mg(2+). Lys-15 serves as a coordination point for ATP. Arg-89 lines the substrate pocket. Asp-146 acts as the Proton donor/acceptor in catalysis. Residues 206-210 (HVGNG), 283-285 (DMR), and 331-335 (GMGEN) each bind ATP. Glu-383 contributes to the Mg(2+) binding site.

Belongs to the acetokinase family. Homodimer. Mg(2+) is required as a cofactor. Requires Mn(2+) as cofactor.

It localises to the cytoplasm. It carries out the reaction acetate + ATP = acetyl phosphate + ADP. Its pathway is metabolic intermediate biosynthesis; acetyl-CoA biosynthesis; acetyl-CoA from acetate: step 1/2. Its function is as follows. Catalyzes the formation of acetyl phosphate from acetate and ATP. Can also catalyze the reverse reaction. The chain is Acetate kinase from Streptococcus agalactiae serotype III (strain NEM316).